A 725-amino-acid polypeptide reads, in one-letter code: Fatty acid oxidation complex subunit alpha (725 aa).

Residues Met1–Ser189 form an enoyl-CoA hydratase/isomerase region. Asp296 contributes to the substrate binding site. A 3-hydroxyacyl-CoA dehydrogenase region spans residues Glu311 to Ala725. Residues Met324, Asp343, Val400–Glu402, Lys407, and Ser429 each bind NAD(+). Residue His450 is the For 3-hydroxyacyl-CoA dehydrogenase activity of the active site. Asn453 serves as a coordination point for NAD(+). Residues Asn500 and Tyr660 each contribute to the substrate site.

In the N-terminal section; belongs to the enoyl-CoA hydratase/isomerase family. This sequence in the C-terminal section; belongs to the 3-hydroxyacyl-CoA dehydrogenase family. In terms of assembly, heterotetramer of two alpha chains (FadB) and two beta chains (FadA).

It catalyses the reaction a (3S)-3-hydroxyacyl-CoA + NAD(+) = a 3-oxoacyl-CoA + NADH + H(+). The catalysed reaction is a (3S)-3-hydroxyacyl-CoA = a (2E)-enoyl-CoA + H2O. The enzyme catalyses a 4-saturated-(3S)-3-hydroxyacyl-CoA = a (3E)-enoyl-CoA + H2O. It carries out the reaction (3S)-3-hydroxybutanoyl-CoA = (3R)-3-hydroxybutanoyl-CoA. It catalyses the reaction a (3Z)-enoyl-CoA = a 4-saturated (2E)-enoyl-CoA. The catalysed reaction is a (3E)-enoyl-CoA = a 4-saturated (2E)-enoyl-CoA. It participates in lipid metabolism; fatty acid beta-oxidation. In terms of biological role, involved in the aerobic and anaerobic degradation of long-chain fatty acids via beta-oxidation cycle. Catalyzes the formation of 3-oxoacyl-CoA from enoyl-CoA via L-3-hydroxyacyl-CoA. It can also use D-3-hydroxyacyl-CoA and cis-3-enoyl-CoA as substrate. The protein is Fatty acid oxidation complex subunit alpha of Aliivibrio fischeri (strain MJ11) (Vibrio fischeri).